The chain runs to 212 residues: Neuroendocrine protein 7B2 (212 aa).

The first 26 residues, 1 to 26 (MVSRMVSTMLSGLLFWLASGWTPAFA), serve as a signal peptide directing secretion. Cys-120 and Cys-130 are oxidised to a cystine. Phosphoserine occurs at positions 141 and 205. Residues 174 to 212 (GGERRKRRSVNPYLQGQRLDNVVAKKSVPHFSDEDKDPE) form a disordered region.

It belongs to the 7B2 family. In terms of assembly, interacts with PCSK2/PC2 early in the secretory pathway. Dissociation occurs at later stages. In terms of processing, proteolytically cleaved in the Golgi by a furin-like convertase to generate bioactive peptides. Sulfated on tyrosine residues.

Its subcellular location is the secreted. Functionally, acts as a molecular chaperone for PCSK2/PC2, preventing its premature activation in the regulated secretory pathway. Binds to inactive PCSK2 in the endoplasmic reticulum and facilitates its transport from there to later compartments of the secretory pathway where it is proteolytically matured and activated. Also required for cleavage of PCSK2 but does not appear to be involved in its folding. Plays a role in regulating pituitary hormone secretion. The C-terminal peptide inhibits PCSK2 in vitro. The polypeptide is Neuroendocrine protein 7B2 (SCG5) (Homo sapiens (Human)).